The following is a 683-amino-acid chain: Long-chain-fatty-acid--CoA ligase 5 (683 aa).

A helical; Signal-anchor for type III membrane protein membrane pass occupies residues 12-32 (LPTPALICLLTFGTAIFLWLI). Residues 33–683 (NRPQPVLPLI…IKSLYESIEE (651 aa)) are Cytoplasmic-facing. Lysine 361 carries the N6-acetyllysine modification.

It belongs to the ATP-dependent AMP-binding enzyme family.

Its subcellular location is the mitochondrion. It localises to the endoplasmic reticulum. It is found in the mitochondrion outer membrane. The protein resides in the endoplasmic reticulum membrane. The protein localises to the cell membrane. It catalyses the reaction a long-chain fatty acid + ATP + CoA = a long-chain fatty acyl-CoA + AMP + diphosphate. The enzyme catalyses (5Z,8Z,11Z,14Z)-eicosatetraenoate + ATP + CoA = (5Z,8Z,11Z,14Z)-eicosatetraenoyl-CoA + AMP + diphosphate. It carries out the reaction hexadecanoate + ATP + CoA = hexadecanoyl-CoA + AMP + diphosphate. The catalysed reaction is (E)-hexadec-2-enoate + ATP + CoA = (2E)-hexadecenoyl-CoA + AMP + diphosphate. It catalyses the reaction 15-hydroxy-(5Z,8Z,11Z,13E)-eicosatetraenoate + ATP + CoA = 15-hydroxy-(5Z,8Z,11Z,13E)-eicosatetraenoyl-CoA + AMP + diphosphate. The enzyme catalyses 12-hydroxy-(5Z,8Z,10E,14Z)-eicosatetraenoate + ATP + CoA = 12-hydroxy-(5Z,8Z,10E,14Z)-eicosatetraenoyl-CoA + AMP + diphosphate. It carries out the reaction 5-hydroxy-(6E,8Z,11Z,14Z)-eicosatetraenoate + ATP + CoA = 5-hydroxy-(6E,8Z,11Z,14Z)-eicosatetraenoyl-CoA + AMP + diphosphate. The catalysed reaction is 14,15-epoxy-(5Z,8Z,11Z)-eicosatrienoate + ATP + CoA = 14,15-epoxy-(5Z,8Z,11Z)-eicosatrienoyl-CoA + AMP + diphosphate. It catalyses the reaction 11,12-epoxy-(5Z,8Z,14Z)-eicosatrienoate + ATP + CoA = 11,12-epoxy-(5Z,8Z,14Z)-eicosatrienoyl-CoA + AMP + diphosphate. The enzyme catalyses (9Z)-octadecenoate + ATP + CoA = (9Z)-octadecenoyl-CoA + AMP + diphosphate. Functionally, catalyzes the conversion of long-chain fatty acids to their active form acyl-CoAs for both synthesis of cellular lipids, and degradation via beta-oxidation. ACSL5 may activate fatty acids from exogenous sources for the synthesis of triacylglycerol destined for intracellular storage. It was suggested that it may also stimulate fatty acid oxidation. At the villus tip of the crypt-villus axis of the small intestine may sensitize epithelial cells to apoptosis specifically triggered by the death ligand TRAIL. May have a role in the survival of glioma cells. Utilizes a wide range of saturated fatty acids with a preference for C16-C18 unsaturated fatty acids. This Mus musculus (Mouse) protein is Long-chain-fatty-acid--CoA ligase 5.